We begin with the raw amino-acid sequence, 156 residues long: Small ribosomal subunit protein uS7 (156 aa).

This sequence belongs to the universal ribosomal protein uS7 family. In terms of assembly, part of the 30S ribosomal subunit. Contacts proteins S9 and S11.

Functionally, one of the primary rRNA binding proteins, it binds directly to 16S rRNA where it nucleates assembly of the head domain of the 30S subunit. Is located at the subunit interface close to the decoding center, probably blocks exit of the E-site tRNA. This is Small ribosomal subunit protein uS7 from Shewanella sp. (strain ANA-3).